The primary structure comprises 273 residues: 4-diphosphocytidyl-2-C-methyl-D-erythritol kinase (273 aa).

Lys9 is a catalytic residue. 90–100 provides a ligand contact to ATP; sequence PVAAGLGGGSA. Asp129 is an active-site residue.

The protein belongs to the GHMP kinase family. IspE subfamily.

The enzyme catalyses 4-CDP-2-C-methyl-D-erythritol + ATP = 4-CDP-2-C-methyl-D-erythritol 2-phosphate + ADP + H(+). It participates in isoprenoid biosynthesis; isopentenyl diphosphate biosynthesis via DXP pathway; isopentenyl diphosphate from 1-deoxy-D-xylulose 5-phosphate: step 3/6. Catalyzes the phosphorylation of the position 2 hydroxy group of 4-diphosphocytidyl-2C-methyl-D-erythritol. This is 4-diphosphocytidyl-2-C-methyl-D-erythritol kinase from Erythrobacter litoralis (strain HTCC2594).